A 1410-amino-acid polypeptide reads, in one-letter code: Non-secreted LysM effector LysM15 (1410 aa).

LysM domains follow at residues 1179 to 1225 (TTYT…DICM) and 1231 to 1277 (TQYT…EILG). Positions 1291–1303 (TTGDGITTTPGNG) are enriched in low complexity. The tract at residues 1291–1317 (TTGDGITTTPGNGEYAQGVVSPPENST) is disordered. The LysM 3 domain occupies 1328–1375 (RWYSATADDLCVQICLKSGVSAKLFKAANPSLAADCDNSLIAGDAYCV).

It belongs to the secreted LysM effector family.

Its function is as follows. Non-secreted LysM effector that might be involved in manipulation of host defenses for successful infection. The polypeptide is Non-secreted LysM effector LysM15 (Penicillium expansum (Blue mold rot fungus)).